Reading from the N-terminus, the 339-residue chain is Inositol 2-dehydrogenase (339 aa).

The protein belongs to the Gfo/Idh/MocA family. In terms of assembly, homotetramer.

The enzyme catalyses myo-inositol + NAD(+) = scyllo-inosose + NADH + H(+). In terms of biological role, involved in the oxidation of myo-inositol (MI) to 2-keto-myo-inositol (2KMI or 2-inosose). In Leifsonia xyli subsp. xyli (strain CTCB07), this protein is Inositol 2-dehydrogenase.